The chain runs to 90 residues: Large ribosomal subunit protein bL27 (90 aa).

A disordered region spans residues 1–21 (MAHKKAGGSSRNGRDSHGKRL).

The protein belongs to the bacterial ribosomal protein bL27 family.

The chain is Large ribosomal subunit protein bL27 from Nitrobacter winogradskyi (strain ATCC 25391 / DSM 10237 / CIP 104748 / NCIMB 11846 / Nb-255).